The following is a 158-amino-acid chain: NAD(P)H-quinone oxidoreductase subunit J, chloroplastic (158 aa).

The protein belongs to the complex I 30 kDa subunit family. In terms of assembly, NDH is composed of at least 16 different subunits, 5 of which are encoded in the nucleus.

It localises to the plastid. The protein resides in the chloroplast thylakoid membrane. The catalysed reaction is a plastoquinone + NADH + (n+1) H(+)(in) = a plastoquinol + NAD(+) + n H(+)(out). It carries out the reaction a plastoquinone + NADPH + (n+1) H(+)(in) = a plastoquinol + NADP(+) + n H(+)(out). Functionally, NDH shuttles electrons from NAD(P)H:plastoquinone, via FMN and iron-sulfur (Fe-S) centers, to quinones in the photosynthetic chain and possibly in a chloroplast respiratory chain. The immediate electron acceptor for the enzyme in this species is believed to be plastoquinone. Couples the redox reaction to proton translocation, and thus conserves the redox energy in a proton gradient. The sequence is that of NAD(P)H-quinone oxidoreductase subunit J, chloroplastic from Lemna minor (Common duckweed).